The following is a 556-amino-acid chain: 2-succinyl-5-enolpyruvyl-6-hydroxy-3-cyclohexene-1-carboxylate synthase (556 aa).

This sequence belongs to the TPP enzyme family. MenD subfamily. Homodimer. Requires Mg(2+) as cofactor. Mn(2+) serves as cofactor. Thiamine diphosphate is required as a cofactor.

The catalysed reaction is isochorismate + 2-oxoglutarate + H(+) = 5-enolpyruvoyl-6-hydroxy-2-succinyl-cyclohex-3-ene-1-carboxylate + CO2. It participates in quinol/quinone metabolism; 1,4-dihydroxy-2-naphthoate biosynthesis; 1,4-dihydroxy-2-naphthoate from chorismate: step 2/7. Its pathway is quinol/quinone metabolism; menaquinone biosynthesis. In terms of biological role, catalyzes the thiamine diphosphate-dependent decarboxylation of 2-oxoglutarate and the subsequent addition of the resulting succinic semialdehyde-thiamine pyrophosphate anion to isochorismate to yield 2-succinyl-5-enolpyruvyl-6-hydroxy-3-cyclohexene-1-carboxylate (SEPHCHC). The chain is 2-succinyl-5-enolpyruvyl-6-hydroxy-3-cyclohexene-1-carboxylate synthase from Shigella sonnei (strain Ss046).